A 320-amino-acid chain; its full sequence is tRNA-cytidine(32) 2-sulfurtransferase (320 aa).

The PP-loop motif motif lies at 54–59; sequence SGGKDS. 3 residues coordinate [4Fe-4S] cluster: cysteine 129, cysteine 132, and cysteine 220.

It belongs to the TtcA family. As to quaternary structure, homodimer. The cofactor is Mg(2+). It depends on [4Fe-4S] cluster as a cofactor.

The protein localises to the cytoplasm. The enzyme catalyses cytidine(32) in tRNA + S-sulfanyl-L-cysteinyl-[cysteine desulfurase] + AH2 + ATP = 2-thiocytidine(32) in tRNA + L-cysteinyl-[cysteine desulfurase] + A + AMP + diphosphate + H(+). It functions in the pathway tRNA modification. Its function is as follows. Catalyzes the ATP-dependent 2-thiolation of cytidine in position 32 of tRNA, to form 2-thiocytidine (s(2)C32). The sulfur atoms are provided by the cysteine/cysteine desulfurase (IscS) system. The protein is tRNA-cytidine(32) 2-sulfurtransferase of Bordetella pertussis (strain Tohama I / ATCC BAA-589 / NCTC 13251).